The sequence spans 229 residues: Potassium/proton antiporter CemA (229 aa).

Helical transmembrane passes span 6–26 (AFIP…ISLC), 107–127 (ILHF…SFWG), and 189–209 (ILSG…KYWI).

Belongs to the CemA family.

The protein resides in the plastid. It localises to the chloroplast inner membrane. The catalysed reaction is K(+)(in) + H(+)(out) = K(+)(out) + H(+)(in). Contributes to K(+)/H(+) antiport activity by supporting proton efflux to control proton extrusion and homeostasis in chloroplasts in a light-dependent manner to modulate photosynthesis. Prevents excessive induction of non-photochemical quenching (NPQ) under continuous-light conditions. Indirectly promotes efficient inorganic carbon uptake into chloroplasts. This Barbarea verna (Land cress) protein is Potassium/proton antiporter CemA.